The primary structure comprises 237 residues: Ribose-5-phosphate isomerase A (237 aa).

Residues 28–31 (SGST), 83–86 (DGAD), and 97–100 (KGRG) each bind substrate. Glutamate 106 functions as the Proton acceptor in the catalytic mechanism. Residue lysine 124 coordinates substrate.

Belongs to the ribose 5-phosphate isomerase family. In terms of assembly, homodimer.

The catalysed reaction is aldehydo-D-ribose 5-phosphate = D-ribulose 5-phosphate. It participates in carbohydrate degradation; pentose phosphate pathway; D-ribose 5-phosphate from D-ribulose 5-phosphate (non-oxidative stage): step 1/1. In terms of biological role, catalyzes the reversible conversion of ribose-5-phosphate to ribulose 5-phosphate. The sequence is that of Ribose-5-phosphate isomerase A from Thermomicrobium roseum (strain ATCC 27502 / DSM 5159 / P-2).